The following is a 175-amino-acid chain: Putative lipoprotein LppN (175 aa).

The signal sequence occupies residues 1–20; that stretch reads MRLPGRHVLYALSAVTMLAA. Cys21 carries N-palmitoyl cysteine lipidation. A lipid anchor (S-diacylglycerol cysteine) is attached at Cys21. Residues 31–56 are disordered; it reads ASTNMNPTNPPATAETATVSPTPAPQ. Positions 33–48 are enriched in low complexity; the sequence is TNMNPTNPPATAETAT.

It localises to the cell membrane. The chain is Putative lipoprotein LppN (lppN) from Mycobacterium bovis (strain ATCC BAA-935 / AF2122/97).